We begin with the raw amino-acid sequence, 1447 residues long: DNA topoisomerase 2 (1447 aa).

ATP-binding positions include Asn-72, Asn-101, 129 to 131 (SSN), and 142 to 149 (GRNGYGAK). Positions 323 to 325 (KKK) are interaction with DNA. An ATP-binding site is contributed by 357 to 359 (QTK). One can recognise a Toprim domain in the interval 435 to 552 (CTLILTEGDS…ELLRLPFLEE (118 aa)). The Mg(2+) site is built by Glu-441, Asp-521, and Asp-523. The Topo IIA-type catalytic domain maps to 695-1169 (IPSLVDGLKP…TPEMLWLDDL (475 aa)). The active-site O-(5'-phospho-DNA)-tyrosine intermediate is the Tyr-785. The segment at 972–981 (KLTTTLSTNQ) is interaction with DNA. Disordered regions lie at residues 1079–1110 (EDAE…EVDP), 1183–1231 (ERAE…DGEP), and 1246–1447 (AAAK…DFNC). Over residues 1081 to 1094 (AEQADEEDEEEEEA) the composition is skewed to acidic residues. Basic and acidic residues predominate over residues 1255–1281 (KEPKKPKEPKEPKVKKEPKGKQIKAEP). Positions 1283–1293 (ASGDEVDEFDA) are enriched in acidic residues. Ser-1284 carries the phosphoserine modification. 2 stretches are compositionally biased toward basic and acidic residues: residues 1310–1325 (VKKE…KKEN) and 1332–1359 (SKID…ERPG). The residue at position 1344 (Ser-1344) is a Phosphoserine. A Phosphothreonine modification is found at Thr-1352. 4 positions are modified to phosphoserine: Ser-1374, Ser-1385, Ser-1392, and Ser-1396. Over residues 1374–1394 (SDEEEDGGNVGSDDDGNASDD) the composition is skewed to acidic residues. Residues 1395-1408 (DSPKRPAKRGREDE) show a composition bias toward basic and acidic residues. The segment covering 1413–1423 (AKKKAPPKKRR) has biased composition (basic residues). The span at 1427–1447 (ESDDDDIEIDEDDDDDSDFNC) shows a compositional bias: acidic residues.

The protein belongs to the type II topoisomerase family. As to quaternary structure, homodimer. Interacts with mod(mdg4). Interacts with barr. Interacts with ph-p. Interacts with mle; the interaction mediates association with the MSL dosage compensation complex. Requires Mg(2+) as cofactor. Mn(2+) serves as cofactor. It depends on Ca(2+) as a cofactor. Phosphorylated. Phosphorylation by casein kinase II enhances ATPase activity.

It localises to the nucleus. Its subcellular location is the chromosome. The protein resides in the cytoplasm. It carries out the reaction ATP-dependent breakage, passage and rejoining of double-stranded DNA.. Functionally, control of topological states of DNA by transient breakage and subsequent rejoining of DNA strands. Topoisomerase II makes double-strand breaks. Essential during mitosis and meiosis for proper segregation of daughter chromosomes. During meiosis, it disrupts heterochromatic connections between achiasmate and chiasmate homologs after spindle assembly so that chromosomes can separate at prometaphase I. During mitosis, it functions in the separation of sister chromatids by establishing amphitelic kinetochore attachments in mitotic spindles. May have a role in chromatin condensation and chromosome structure. May be involved in X-chromosome dosage compensation, perhaps by modifying the topological state of compensated genes. Regulates activity of the gypsy chromatin insulator complex by binding to mod(mdg4) and preventing its degradation. The chain is DNA topoisomerase 2 from Drosophila melanogaster (Fruit fly).